A 349-amino-acid chain; its full sequence is Anthranilate phosphoribosyltransferase (349 aa).

5-phospho-alpha-D-ribose 1-diphosphate-binding positions include G82, 85-86 (GD), 92-95 (NVST), 110-118 (KHGNRAVSG), and S122. Residue G82 participates in anthranilate binding. S94 is a Mg(2+) binding site. N113 is a binding site for anthranilate. R168 is an anthranilate binding site. 2 residues coordinate Mg(2+): D227 and E228.

Belongs to the anthranilate phosphoribosyltransferase family. As to quaternary structure, homodimer. Mg(2+) serves as cofactor.

The catalysed reaction is N-(5-phospho-beta-D-ribosyl)anthranilate + diphosphate = 5-phospho-alpha-D-ribose 1-diphosphate + anthranilate. It functions in the pathway amino-acid biosynthesis; L-tryptophan biosynthesis; L-tryptophan from chorismate: step 2/5. Its function is as follows. Catalyzes the transfer of the phosphoribosyl group of 5-phosphorylribose-1-pyrophosphate (PRPP) to anthranilate to yield N-(5'-phosphoribosyl)-anthranilate (PRA). In Pseudomonas entomophila (strain L48), this protein is Anthranilate phosphoribosyltransferase.